The primary structure comprises 413 residues: Probable protein phosphatase 2C 78 (413 aa).

Residues Lys21–Arg40 are disordered. Positions Lys111 to Leu409 constitute a PPM-type phosphatase domain. Residues Asp153, Gly154, Asp327, and Asp400 each contribute to the Mn(2+) site.

The protein belongs to the PP2C family. Requires Mg(2+) as cofactor. It depends on Mn(2+) as a cofactor.

The protein resides in the golgi apparatus. It is found in the nucleus. It carries out the reaction O-phospho-L-seryl-[protein] + H2O = L-seryl-[protein] + phosphate. The catalysed reaction is O-phospho-L-threonyl-[protein] + H2O = L-threonyl-[protein] + phosphate. Functionally, acts as a negative regulator of abscisic acid (ABA) signaling for stomatal closure in leaves, and controls water loss during leaf senescence. Activated by the NAC029/NAP transcription factor during ABA signaling in senescing leaves. Functions as a negative regulator of osmotic stress and ABA signaling. Acts as a negative regulator of response to drought. The protein is Probable protein phosphatase 2C 78 of Arabidopsis thaliana (Mouse-ear cress).